We begin with the raw amino-acid sequence, 348 residues long: Phenylalanine--tRNA ligase alpha subunit (348 aa).

Position 259 (E259) interacts with Mg(2+).

Belongs to the class-II aminoacyl-tRNA synthetase family. Phe-tRNA synthetase alpha subunit type 1 subfamily. As to quaternary structure, tetramer of two alpha and two beta subunits. The cofactor is Mg(2+).

It localises to the cytoplasm. The enzyme catalyses tRNA(Phe) + L-phenylalanine + ATP = L-phenylalanyl-tRNA(Phe) + AMP + diphosphate + H(+). This chain is Phenylalanine--tRNA ligase alpha subunit, found in Levilactobacillus brevis (strain ATCC 367 / BCRC 12310 / CIP 105137 / JCM 1170 / LMG 11437 / NCIMB 947 / NCTC 947) (Lactobacillus brevis).